The following is a 409-amino-acid chain: Wadjet protein JetD (409 aa).

Its function is as follows. Component of antiplasmid transformation system Wadjet type I, composed of JetA, JetB, JetC and JetD. Expression of Wadjet type I in B.subtilis (strain BEST7003) reduces the transformation efficiency of plasmid pHCMC05. The sequence is that of Wadjet protein JetD from Bacillus cereus (strain Q1).